Here is a 90-residue protein sequence, read N- to C-terminus: Probable Fe(2+)-trafficking protein (90 aa).

This sequence belongs to the Fe(2+)-trafficking protein family.

Functionally, could be a mediator in iron transactions between iron acquisition and iron-requiring processes, such as synthesis and/or repair of Fe-S clusters in biosynthetic enzymes. The protein is Probable Fe(2+)-trafficking protein of Nitrosomonas europaea (strain ATCC 19718 / CIP 103999 / KCTC 2705 / NBRC 14298).